The chain runs to 141 residues: Nucleoside diphosphate kinase (141 aa).

6 residues coordinate ATP: Lys-11, Phe-59, Arg-87, Thr-93, Arg-104, and Asn-114. His-117 (pros-phosphohistidine intermediate) is an active-site residue.

Belongs to the NDK family. The cofactor is Mg(2+).

Its subcellular location is the cytoplasm. The enzyme catalyses a 2'-deoxyribonucleoside 5'-diphosphate + ATP = a 2'-deoxyribonucleoside 5'-triphosphate + ADP. It carries out the reaction a ribonucleoside 5'-diphosphate + ATP = a ribonucleoside 5'-triphosphate + ADP. Major role in the synthesis of nucleoside triphosphates other than ATP. The ATP gamma phosphate is transferred to the NDP beta phosphate via a ping-pong mechanism, using a phosphorylated active-site intermediate. This is Nucleoside diphosphate kinase from Staphylothermus marinus (strain ATCC 43588 / DSM 3639 / JCM 9404 / F1).